The following is a 581-amino-acid chain: MSGFVVWFTGLSGAGKSTLAAMLSAELRARSVHVEVLDGDEVRTNLSKGLGFSKEDRDTNIRRIGYVAKLIARSGACAMTAAISPYKAIRDEQRAQIPHFVEVFCSCEIPVLAERDAKGLYKKALAGEIKNFTGIDDPYEAPESPEVVVDTGKETKEESLAKILAKLEELGYVPRRGAAVAVSGAAAAGAAAGGARGLIAPHGGELVNRWVEGAAKASLAERAKGLPVIELDERTESDVEMIAIGAFSPLRGFMNSKDYLRVVREMRLESGLPWSMPITLAVSEQAAEGLRVGSEAALRARDGRIVAVIELSDKWRPNKELEAQEVFRTTETKHPGVAYLMSTGPVYLGGEIRVLERPVDSAFPAYDRSPATTRAYFAEKGWRRIVGFQTRNPIHRAHEFITKTALEICDGLMIHPLVGATKSDDIPADVRMRCYEELIAKYYVKDRVLLSIYPAAMRYAGPREAIFHALARKNYGCSHFIVGRDHAGVGSYYGTYDAQEIFNAFSPGELGITTLNFENAFYSTVVGAMATAKTAPGDASTQVNLSGTKVRELLQRGELPPPEFSRPEVARILIESMRSSS.

Residues Met-1 to Ala-200 form an adenylsulfate kinase region. Residue Gly-10 to Ser-17 coordinates ATP. Ser-84 (phosphoserine intermediate) is an active-site residue. The tract at residues Pro-201–Ser-581 is sulfate adenylyltransferase.

In the N-terminal section; belongs to the APS kinase family. It in the C-terminal section; belongs to the sulfate adenylyltransferase family.

It catalyses the reaction sulfate + ATP + H(+) = adenosine 5'-phosphosulfate + diphosphate. It carries out the reaction adenosine 5'-phosphosulfate + ATP = 3'-phosphoadenylyl sulfate + ADP + H(+). The protein operates within sulfur metabolism; hydrogen sulfide biosynthesis; sulfite from sulfate: step 1/3. It functions in the pathway sulfur metabolism; hydrogen sulfide biosynthesis; sulfite from sulfate: step 2/3. The chain is Probable bifunctional SAT/APS kinase 2 (sat2/cysC2) from Sorangium cellulosum (strain So ce56) (Polyangium cellulosum (strain So ce56)).